Reading from the N-terminus, the 324-residue chain is NADH-ubiquinone oxidoreductase chain 1 (324 aa).

The next 8 helical transmembrane spans lie at 10–30, 76–96, 107–127, 143–163, 178–198, 229–249, 260–280, and 300–320; these read MIMT…LTLV, FLFI…WIPL, LGLL…LWSG, VAQT…TIML, PIYL…STLA, LFFL…ITLF, ELFS…FLWV, and FLPL…SYAG.

Belongs to the complex I subunit 1 family.

The protein localises to the mitochondrion inner membrane. It catalyses the reaction a ubiquinone + NADH + 5 H(+)(in) = a ubiquinol + NAD(+) + 4 H(+)(out). Its function is as follows. Core subunit of the mitochondrial membrane respiratory chain NADH dehydrogenase (Complex I) that is believed to belong to the minimal assembly required for catalysis. Complex I functions in the transfer of electrons from NADH to the respiratory chain. The immediate electron acceptor for the enzyme is believed to be ubiquinone. The protein is NADH-ubiquinone oxidoreductase chain 1 (MT-ND1) of Excalfactoria chinensis (Blue-breasted quail).